The following is a 138-amino-acid chain: 1,4-dihydroxy-2-naphthoyl-CoA hydrolase (138 aa).

The active site involves aspartate 13.

The protein belongs to the 4-hydroxybenzoyl-CoA thioesterase family. DHNA-CoA hydrolase subfamily.

It carries out the reaction 1,4-dihydroxy-2-naphthoyl-CoA + H2O = 1,4-dihydroxy-2-naphthoate + CoA + H(+). Its pathway is cofactor biosynthesis; phylloquinone biosynthesis. It functions in the pathway quinol/quinone metabolism; 1,4-dihydroxy-2-naphthoate biosynthesis; 1,4-dihydroxy-2-naphthoate from chorismate: step 7/7. Its function is as follows. Catalyzes the hydrolysis of 1,4-dihydroxy-2-naphthoyl-CoA (DHNA-CoA) to 1,4-dihydroxy-2-naphthoate (DHNA), a reaction involved in phylloquinone (vitamin K1) biosynthesis. In Microcystis aeruginosa (strain NIES-843 / IAM M-2473), this protein is 1,4-dihydroxy-2-naphthoyl-CoA hydrolase.